Consider the following 474-residue polypeptide: 3-isopropylmalate dehydratase large subunit (474 aa).

Positions 355, 415, and 418 each coordinate [4Fe-4S] cluster.

This sequence belongs to the aconitase/IPM isomerase family. LeuC type 1 subfamily. In terms of assembly, heterodimer of LeuC and LeuD. It depends on [4Fe-4S] cluster as a cofactor.

It catalyses the reaction (2R,3S)-3-isopropylmalate = (2S)-2-isopropylmalate. Its pathway is amino-acid biosynthesis; L-leucine biosynthesis; L-leucine from 3-methyl-2-oxobutanoate: step 2/4. Its function is as follows. Catalyzes the isomerization between 2-isopropylmalate and 3-isopropylmalate, via the formation of 2-isopropylmaleate. This is 3-isopropylmalate dehydratase large subunit from Shewanella sp. (strain MR-4).